The primary structure comprises 78 residues: Large ribosomal subunit protein bL28 (78 aa).

Positions Met-1–Ala-21 are disordered.

It belongs to the bacterial ribosomal protein bL28 family.

In Bordetella petrii (strain ATCC BAA-461 / DSM 12804 / CCUG 43448), this protein is Large ribosomal subunit protein bL28.